The chain runs to 93 residues: UPF0728 protein C10orf53 homolog (93 aa).

This sequence belongs to the UPF0728 family.

The polypeptide is UPF0728 protein C10orf53 homolog (Mus musculus (Mouse)).